Here is a 59-residue protein sequence, read N- to C-terminus: MKTMKVTQIKSGAHRLKSHKACLMGLGLRRIGHTVEVEDTPSTRGMVNRINYMVKVEEA.

Belongs to the universal ribosomal protein uL30 family. As to quaternary structure, part of the 50S ribosomal subunit.

The chain is Large ribosomal subunit protein uL30 from Psychrobacter sp. (strain PRwf-1).